A 156-amino-acid polypeptide reads, in one-letter code: Small ribosomal subunit protein uS7 (156 aa).

This sequence belongs to the universal ribosomal protein uS7 family. In terms of assembly, part of the 30S ribosomal subunit. Contacts proteins S9 and S11.

Functionally, one of the primary rRNA binding proteins, it binds directly to 16S rRNA where it nucleates assembly of the head domain of the 30S subunit. Is located at the subunit interface close to the decoding center, probably blocks exit of the E-site tRNA. This chain is Small ribosomal subunit protein uS7, found in Roseobacter denitrificans (strain ATCC 33942 / OCh 114) (Erythrobacter sp. (strain OCh 114)).